Here is a 143-residue protein sequence, read N- to C-terminus: uncharacterized protein (143 aa).

This is an uncharacterized protein from Homo sapiens (Human).